Consider the following 89-residue polypeptide: Small ribosomal subunit protein uS15 (89 aa).

The protein belongs to the universal ribosomal protein uS15 family. As to quaternary structure, part of the 30S ribosomal subunit. Forms a bridge to the 50S subunit in the 70S ribosome, contacting the 23S rRNA.

Functionally, one of the primary rRNA binding proteins, it binds directly to 16S rRNA where it helps nucleate assembly of the platform of the 30S subunit by binding and bridging several RNA helices of the 16S rRNA. In terms of biological role, forms an intersubunit bridge (bridge B4) with the 23S rRNA of the 50S subunit in the ribosome. In Haemophilus influenzae (strain 86-028NP), this protein is Small ribosomal subunit protein uS15.